Reading from the N-terminus, the 30-residue chain is MDRETEAETAELVTESLVEEVSIDGMCGVY.

This sequence belongs to the mycofactocin precursor peptide family. Interacts with MftB. The post-translational modifications that lead to mycofactocin involve oxidative decarboxylation of the C-terminal tyrosine residue catalyzed by MftC, introduction of a tyramine-valine cross-link, removal of the modified C-terminal dipeptide by MftE. The released dipeptide then undergoes oxidative deamination by MftD, glycosylation by MftF and methylation by an unknown enzyme.

Precursor peptide that leads to mycofactocin (MFT) after extensive post-translational modifications by enzymes encoded by adjacent genes. Mycofactocin acts as a redox cofactor of nicotinamide-dependent oxidoreductases encoded in the same locus. The protein is Mycofactocin precursor peptide of Mycobacterium ulcerans (strain Agy99).